A 65-amino-acid chain; its full sequence is Alpha-toxin Bot1 (65 aa).

The LCN-type CS-alpha/beta domain maps to 2–64; sequence RDAYIAQPEN…VPIRIPGKCH (63 aa). 4 disulfides stabilise this stretch: C12-C63, C16-C36, C22-C46, and C26-C48. Phenylalanine amide is present on F65.

The protein belongs to the long (4 C-C) scorpion toxin superfamily. Sodium channel inhibitor family. Alpha subfamily. In terms of tissue distribution, expressed by the venom gland.

Its subcellular location is the secreted. Alpha toxins bind voltage-independently at site-3 of sodium channels (Nav) and inhibit the inactivation of the activated channels, thereby blocking neuronal transmission. This chain is Alpha-toxin Bot1, found in Buthus occitanus tunetanus (Common European scorpion).